Consider the following 184-residue polypeptide: MTAPQEPVDSTPESGENAATPGLEDDLSAELAALRAELEAAQATVKAQQEQVLRAAAEAENVRRRAQEDVAKARKFGIESFAESLVPVKDSLEAALAQPDQAAQAWREGVEVTLKQLTAAFERNLLKEIAPAQGDKFDPHLHQAISSVPADQPANTVLQLLQKGYVIADRTLRPALVVVSAGQG.

The disordered stretch occupies residues 1 to 26; sequence MTAPQEPVDSTPESGENAATPGLEDD.

It belongs to the GrpE family. In terms of assembly, homodimer.

It is found in the cytoplasm. Its function is as follows. Participates actively in the response to hyperosmotic and heat shock by preventing the aggregation of stress-denatured proteins, in association with DnaK and GrpE. It is the nucleotide exchange factor for DnaK and may function as a thermosensor. Unfolded proteins bind initially to DnaJ; upon interaction with the DnaJ-bound protein, DnaK hydrolyzes its bound ATP, resulting in the formation of a stable complex. GrpE releases ADP from DnaK; ATP binding to DnaK triggers the release of the substrate protein, thus completing the reaction cycle. Several rounds of ATP-dependent interactions between DnaJ, DnaK and GrpE are required for fully efficient folding. This is Protein GrpE from Bordetella bronchiseptica (strain ATCC BAA-588 / NCTC 13252 / RB50) (Alcaligenes bronchisepticus).